Reading from the N-terminus, the 390-residue chain is Succinyl-diaminopimelate desuccinylase (390 aa).

Histidine 74 serves as a coordination point for Zn(2+). Aspartate 76 is a catalytic residue. Zn(2+) is bound at residue aspartate 107. The active-site Proton acceptor is the glutamate 140. Glutamate 141, glutamate 169, and histidine 363 together coordinate Zn(2+).

It belongs to the peptidase M20A family. DapE subfamily. Homodimer. The cofactor is Zn(2+). It depends on Co(2+) as a cofactor.

The catalysed reaction is N-succinyl-(2S,6S)-2,6-diaminopimelate + H2O = (2S,6S)-2,6-diaminopimelate + succinate. Its pathway is amino-acid biosynthesis; L-lysine biosynthesis via DAP pathway; LL-2,6-diaminopimelate from (S)-tetrahydrodipicolinate (succinylase route): step 3/3. Its function is as follows. Catalyzes the hydrolysis of N-succinyl-L,L-diaminopimelic acid (SDAP), forming succinate and LL-2,6-diaminopimelate (DAP), an intermediate involved in the bacterial biosynthesis of lysine and meso-diaminopimelic acid, an essential component of bacterial cell walls. In Bartonella bacilliformis (strain ATCC 35685 / KC583 / Herrer 020/F12,63), this protein is Succinyl-diaminopimelate desuccinylase.